The sequence spans 303 residues: Sulfotransferase 6B1 (303 aa).

Lys65–Trp70 provides a ligand contact to 3'-phosphoadenylyl sulfate. The active-site Proton acceptor is the His118. 3'-phosphoadenylyl sulfate contacts are provided by residues Arg140, Ser148, Tyr203, Ser237–Met242, and Arg259–Gly261.

The protein belongs to the sulfotransferase 1 family. Expressed in brain, heart, kidney, thymus, lung, liver and testis.

It is found in the cytoplasm. The protein localises to the cytosol. The enzyme catalyses thyroxine + 3'-phosphoadenylyl sulfate = thyroxine sulfate + adenosine 3',5'-bisphosphate + H(+). Its function is as follows. Sulfotransferase that utilizes 3'-phospho-5'-adenylyl sulfate (PAPS) as sulfonate donor to catalyze the sulfate conjugation of thyroxine. Involved in the metabolism of thyroxine. The chain is Sulfotransferase 6B1 (Sult6b1) from Mus musculus (Mouse).